An 867-amino-acid polypeptide reads, in one-letter code: MTAFSSPSSNAASSATDRYQPLALEERWQALWKEQRLYETQDPKPGQRAFYALSMFPYPSGTLHMGHVRNYVITDVIARVQRMRGDAVLHPMGWDAFGLPAENAAIERKIEPGVWTDSNIAQMRGQLGRLGLSIDWDREVATCHSDYYRWTQWLFLELHAGGLAYQKDATVNWDPVDQTVLANEQVDADGRSWRSGALVEKRDLRQWFLRITDYADALLDDLDQLQGWPERVRTMQANWIGRSIGAEIDFQVEAHPGTSITVFTTRPDTLFGVSYLVLAPDHALVDQLTTSEERISVTAFRDLMAELSQDERTSDDQPKRGVPTGAVAINPANGKSIPIWIADYVLADYGTGAVMGVPAHDVRDFSFARQHELPVQRVIEVSGTNEHVNDGEAWAGPGTLIHSAGFSGLSNDEAKTAITNHGAENGWARAKRQYRLRDWLISRQRYWGCPIPIIHCDDCGAVPVPRDQLPVELPTGIDLKGAGGSPLARAEDWVSVTCPKCGKPARRETDTMDTFMCSSWYYLRFADPHNRDLPFNATSVNRWLPVKQYVGGIEHAILHLLYARFFTKALNDRDLLQTKEPFERLLTQGMVQGTTYRNPRTGRYISPAAVKDESNPLDPDDGGPLEVLFEKMSKSKHNGVDPAAVIDRYGADTARMFILFKAPPEKDLEWDDADVEGQFRFLQRLWRLVDSEVNHDGVSPATGESDSDIRRAVHQAIKAVSEDLSDDFQFNTAISELMKLSNSLSSGLAQASPGVRQEAMSALVRLLAPFAPHLAEEFWQRLGGEDSVHCQPWPDHDPEALVLASIEVVIQVKGKVRGSMSVAADCSKEELERLALASDVAQRWLEGKPPRRVIVVPGKLVNLVPSS.

The 'HIGH' region signature appears at 57 to 67 (PYPSGTLHMGH). The tract at residues 308 to 327 (SQDERTSDDQPKRGVPTGAV) is disordered. Over residues 309–319 (QDERTSDDQPK) the composition is skewed to basic and acidic residues. The 'KMSKS' region motif lies at 631-635 (KMSKS). Residue Lys634 participates in ATP binding.

Belongs to the class-I aminoacyl-tRNA synthetase family.

The protein localises to the cytoplasm. The catalysed reaction is tRNA(Leu) + L-leucine + ATP = L-leucyl-tRNA(Leu) + AMP + diphosphate. The chain is Leucine--tRNA ligase from Synechococcus sp. (strain CC9311).